Consider the following 95-residue polypeptide: Co-chaperonin GroES (95 aa).

The protein belongs to the GroES chaperonin family. As to quaternary structure, heptamer of 7 subunits arranged in a ring. Interacts with the chaperonin GroEL.

The protein localises to the cytoplasm. In terms of biological role, together with the chaperonin GroEL, plays an essential role in assisting protein folding. The GroEL-GroES system forms a nano-cage that allows encapsulation of the non-native substrate proteins and provides a physical environment optimized to promote and accelerate protein folding. GroES binds to the apical surface of the GroEL ring, thereby capping the opening of the GroEL channel. The protein is Co-chaperonin GroES of Nitratidesulfovibrio vulgaris (strain ATCC 29579 / DSM 644 / CCUG 34227 / NCIMB 8303 / VKM B-1760 / Hildenborough) (Desulfovibrio vulgaris).